The sequence spans 203 residues: Small ribosomal subunit protein uS4 (203 aa).

In terms of domain architecture, S4 RNA-binding spans 93–154 (CRFDNVVFRA…KSRNMDAVRN (62 aa)).

The protein belongs to the universal ribosomal protein uS4 family. As to quaternary structure, part of the 30S ribosomal subunit. Contacts protein S5. The interaction surface between S4 and S5 is involved in control of translational fidelity.

In terms of biological role, one of the primary rRNA binding proteins, it binds directly to 16S rRNA where it nucleates assembly of the body of the 30S subunit. Its function is as follows. With S5 and S12 plays an important role in translational accuracy. The polypeptide is Small ribosomal subunit protein uS4 (Chloroherpeton thalassium (strain ATCC 35110 / GB-78)).